We begin with the raw amino-acid sequence, 329 residues long: Quinone oxidoreductase (329 aa).

A2 carries the post-translational modification N-acetylalanine. K23 bears the N6-acetyllysine mark. Residues Y53, 158–161, G181, H200, N229, 246–249, and 269–271 each bind NADP(+); these read SGGV, VGCR, and VSL. K296 is subject to N6-succinyllysine.

The protein belongs to the zinc-containing alcohol dehydrogenase family. Quinone oxidoreductase subfamily. In terms of assembly, homotetramer.

Its subcellular location is the cytoplasm. The catalysed reaction is 2 a quinone + NADPH + H(+) = 2 a 1,4-benzosemiquinone + NADP(+). In terms of biological role, does not have alcohol dehydrogenase activity. Binds NADP and acts through a one-electron transfer process. Orthoquinones, such as 1,2-naphthoquinone or 9,10-phenanthrenequinone, are the best substrates (in vitro). May act in the detoxification of xenobiotics. Interacts with (AU)-rich elements (ARE) in the 3'-UTR of target mRNA species and enhances their stability. NADPH binding interferes with mRNA binding. The chain is Quinone oxidoreductase (Cryz) from Rattus norvegicus (Rat).